A 137-amino-acid chain; its full sequence is MPTISQLIRKRRVDKIVKTKAPALSYGFNNLKNKVQKYKSPQKSGVCIRVTTMTPKKPNSALRKYARVRLSNGTEVNAYIPGIGHTLQEHSVVLIRGGRVKDLPGVRYHIIRGILDAKGVINRKQSRSKYGSKKNKN.

Aspartate 102 carries the 3-methylthioaspartic acid modification.

Belongs to the universal ribosomal protein uS12 family. In terms of assembly, part of the 30S ribosomal subunit. Contacts proteins S8 and S17. May interact with IF1 in the 30S initiation complex.

Functionally, with S4 and S5 plays an important role in translational accuracy. In terms of biological role, interacts with and stabilizes bases of the 16S rRNA that are involved in tRNA selection in the A site and with the mRNA backbone. Located at the interface of the 30S and 50S subunits, it traverses the body of the 30S subunit contacting proteins on the other side and probably holding the rRNA structure together. The combined cluster of proteins S8, S12 and S17 appears to hold together the shoulder and platform of the 30S subunit. In Phytoplasma mali (strain AT), this protein is Small ribosomal subunit protein uS12.